Here is a 74-residue protein sequence, read N- to C-terminus: Anaphase-promoting complex subunit 13 (74 aa).

The interval 33–56 (LSELPEPEQDNGGTTESVKEQEMK) is disordered.

It belongs to the APC13 family. In terms of assembly, the mammalian APC/C is composed at least of 14 distinct subunits ANAPC1, ANAPC2, CDC27/APC3, ANAPC4, ANAPC5, CDC16/APC6, ANAPC7, CDC23/APC8, ANAPC10, ANAPC11, CDC26/APC12, ANAPC13, ANAPC15 and ANAPC16 that assemble into a complex of at least 19 chains with a combined molecular mass of around 1.2 MDa; APC/C interacts with FZR1 and FBXO5.

It localises to the nucleus. It participates in protein modification; protein ubiquitination. Component of the anaphase promoting complex/cyclosome (APC/C), a cell cycle-regulated E3 ubiquitin ligase that controls progression through mitosis and the G1 phase of the cell cycle. The APC/C complex acts by mediating ubiquitination and subsequent degradation of target proteins: it mainly mediates the formation of 'Lys-11'-linked polyubiquitin chains and, to a lower extent, the formation of 'Lys-48'- and 'Lys-63'-linked polyubiquitin chains. The APC/C complex catalyzes assembly of branched 'Lys-11'-/'Lys-48'-linked branched ubiquitin chains on target proteins. This Mus musculus (Mouse) protein is Anaphase-promoting complex subunit 13 (Anapc13).